A 531-amino-acid polypeptide reads, in one-letter code: Unconventional prefoldin RPB5 interactor (531 aa).

The residue at position 1 (methionine 1) is an N-acetylmethionine. Disordered stretches follow at residues 1–24 (MEPPSEPEPEPQPLAEASAAAPLR), 224–381 (ELES…ELPA), 408–470 (KSRS…SGVS), and 500–531 (TIPERKEVPSEVSEEPTKRVSKFRAARLQQRS). Over residues 13 to 24 (PLAEASAAAPLR) the composition is skewed to low complexity. 2 stretches are compositionally biased toward polar residues: residues 257 to 266 (SPVTDSSAAS) and 280 to 296 (GQVNSLNYSVNGSNSYH). The segment covering 300-319 (DDDEEEEDDDDDDDEDDDNE) has biased composition (acidic residues). Serine 369 carries the phosphoserine; by RPS6KB1 modification. The span at 414-424 (NSVCSDTSESS) shows a compositional bias: polar residues. Serine 439 is modified (phosphoserine).

It belongs to the RNA polymerase II subunit 5-mediating protein family. In terms of assembly, homodimer. Component of the PAQosome complex which is responsible for the biogenesis of several protein complexes and which consists of R2TP complex members RUVBL1, RUVBL2, RPAP3 and PIH1D1, URI complex members PFDN2, PFDN6, PDRG1, UXT and URI1 as well as ASDURF, POLR2E and DNAAF10/WDR92. Interacts with POLR2E/RPB5, RUVBL2 and RUVBL1. Interacts with PFDN2, PFDN4 and STAP1; the interactions are phosphorylation-dependent and occur in a growth-dependent manner in the mitochondrion. Interacts with UXT. Interacts with PPP1CC; the interaction is phosphorylation-dependent and occurs in a growth factor-dependent manner. Interacts (via the middle C-terminal region) with GTF2F1 and GTF2F2. Interacts with DMAP1. Interacts with TSC1 and TSC2. Interacts with PRPF8 and EFTUD2 in a ZNHIT2-dependent manner. In terms of processing, phosphorylation occurs in response to androgen treatment in prostate cancer cells in a mTOR-dependent manner. Phosphorylated; hyperhosphorylated in mitochondria in a mTORC-dependent signaling pathway. Phosphorylated at Ser-369 by RPS6KB1 in a growth factor- and rapamycin-dependent manner. S6K1-mediated mitochondrial phosphorylation at Ser-369 disrupts the URI1-PPP1CC complex in the mitochondrion, relieves PPP1CC phosphatase inhibition activity and hence engages a negative feedback diminishing RPS6KB1 kinase activity, preventing sustained S6K1-dependent signaling. Phosphorylated. Phosphorylation occurs essentially on serine residues. As to expression, expressed in the spinal cord, ganglia, choroid plexus and olfactors epithelium of the developing brain. Expressed in skin, lung, kidney, testis and muscles (at protein level). Expressed strongly in brain and kidney. Expressed weakly in skeletal muscle, lung and liver.

The protein resides in the nucleus. It localises to the cytoplasm. The protein localises to the mitochondrion. Its subcellular location is the cell projection. It is found in the dendrite. Involved in gene transcription regulation. Acts as a transcriptional repressor in concert with the corepressor UXT to regulate androgen receptor (AR) transcription. May act as a tumor suppressor to repress AR-mediated gene transcription and to inhibit anchorage-independent growth in prostate cancer cells. Required for cell survival in ovarian cancer cells. Together with UXT, associates with chromatin to the NKX3-1 promoter region. Functionally, plays a central role in maintaining S6K1 signaling and BAD phosphorylation under normal growth conditions thereby protecting cells from potential deleterious effects of sustained S6K1 signaling. The URI1-PPP1CC complex acts as a central component of a negative feedback mechanism that counteracts excessive S6K1 survival signaling to BAD in response to growth factors. Mediates inhibition of PPP1CC phosphatase activity in mitochondria. Coordinates the regulation of nutrient-sensitive gene expression availability in a mTOR-dependent manner. Seems to be a scaffolding protein able to assemble a prefoldin-like complex that contains PFDs and proteins with roles in transcription and ubiquitination. The chain is Unconventional prefoldin RPB5 interactor (Uri1) from Mus musculus (Mouse).